Here is a 43-residue protein sequence, read N- to C-terminus: Protein PsbN (43 aa).

The helical transmembrane segment at 7–27 (LSIGIAVVVIAVTGFSIYTAF) threads the bilayer.

It belongs to the PsbN family.

The protein resides in the cellular thylakoid membrane. In terms of biological role, may play a role in photosystem I and II biogenesis. The sequence is that of Protein PsbN from Picosynechococcus sp. (strain ATCC 27264 / PCC 7002 / PR-6) (Agmenellum quadruplicatum).